A 127-amino-acid chain; its full sequence is Holo-[acyl-carrier-protein] synthase (127 aa).

Residues Asp-9 and Glu-58 each coordinate Mg(2+).

The protein belongs to the P-Pant transferase superfamily. AcpS family. It depends on Mg(2+) as a cofactor.

Its subcellular location is the cytoplasm. The enzyme catalyses apo-[ACP] + CoA = holo-[ACP] + adenosine 3',5'-bisphosphate + H(+). Transfers the 4'-phosphopantetheine moiety from coenzyme A to a Ser of acyl-carrier-protein. The polypeptide is Holo-[acyl-carrier-protein] synthase (Shewanella baltica (strain OS185)).